A 380-amino-acid polypeptide reads, in one-letter code: Queuine tRNA-ribosyltransferase (380 aa).

D96 acts as the Proton acceptor in catalysis. Substrate-binding positions include 96 to 100 (DSGGF), D150, Q193, and G220. The interval 251–257 (GVGAPDS) is RNA binding. The active-site Nucleophile is the D270. Residues 275 to 279 (TRIAR) are RNA binding; important for wobble base 34 recognition. Zn(2+)-binding residues include C308, C310, C313, and H339.

The protein belongs to the queuine tRNA-ribosyltransferase family. As to quaternary structure, homodimer. Within each dimer, one monomer is responsible for RNA recognition and catalysis, while the other monomer binds to the replacement base PreQ1. Zn(2+) serves as cofactor.

It carries out the reaction 7-aminomethyl-7-carbaguanine + guanosine(34) in tRNA = 7-aminomethyl-7-carbaguanosine(34) in tRNA + guanine. The protein operates within tRNA modification; tRNA-queuosine biosynthesis. Catalyzes the base-exchange of a guanine (G) residue with the queuine precursor 7-aminomethyl-7-deazaguanine (PreQ1) at position 34 (anticodon wobble position) in tRNAs with GU(N) anticodons (tRNA-Asp, -Asn, -His and -Tyr). Catalysis occurs through a double-displacement mechanism. The nucleophile active site attacks the C1' of nucleotide 34 to detach the guanine base from the RNA, forming a covalent enzyme-RNA intermediate. The proton acceptor active site deprotonates the incoming PreQ1, allowing a nucleophilic attack on the C1' of the ribose to form the product. After dissociation, two additional enzymatic reactions on the tRNA convert PreQ1 to queuine (Q), resulting in the hypermodified nucleoside queuosine (7-(((4,5-cis-dihydroxy-2-cyclopenten-1-yl)amino)methyl)-7-deazaguanosine). The chain is Queuine tRNA-ribosyltransferase from Streptococcus pyogenes serotype M3 (strain ATCC BAA-595 / MGAS315).